A 231-amino-acid polypeptide reads, in one-letter code: Ribose-5-phosphate isomerase A (231 aa).

Substrate-binding positions include 32-35 (TGST), 85-88 (DGAD), and 98-101 (KGGG). Glutamate 107 functions as the Proton acceptor in the catalytic mechanism. Lysine 125 serves as a coordination point for substrate.

This sequence belongs to the ribose 5-phosphate isomerase family. In terms of assembly, homodimer.

The enzyme catalyses aldehydo-D-ribose 5-phosphate = D-ribulose 5-phosphate. It participates in carbohydrate degradation; pentose phosphate pathway; D-ribose 5-phosphate from D-ribulose 5-phosphate (non-oxidative stage): step 1/1. In terms of biological role, catalyzes the reversible conversion of ribose-5-phosphate to ribulose 5-phosphate. This Burkholderia cenocepacia (strain ATCC BAA-245 / DSM 16553 / LMG 16656 / NCTC 13227 / J2315 / CF5610) (Burkholderia cepacia (strain J2315)) protein is Ribose-5-phosphate isomerase A.